We begin with the raw amino-acid sequence, 171 residues long: Protein-export protein SecB (171 aa).

Belongs to the SecB family. In terms of assembly, homotetramer, a dimer of dimers. One homotetramer interacts with 1 SecA dimer.

The protein resides in the cytoplasm. Functionally, one of the proteins required for the normal export of preproteins out of the cell cytoplasm. It is a molecular chaperone that binds to a subset of precursor proteins, maintaining them in a translocation-competent state. It also specifically binds to its receptor SecA. In Histophilus somni (strain 129Pt) (Haemophilus somnus), this protein is Protein-export protein SecB.